The sequence spans 359 residues: Peptide chain release factor 1 (359 aa).

N5-methylglutamine is present on Gln-235. The segment covering 283–294 (SKADEERSESRK) has biased composition (basic and acidic residues). Residues 283 to 309 (SKADEERSESRKSQVGSGDRSERIRTY) are disordered.

It belongs to the prokaryotic/mitochondrial release factor family. In terms of processing, methylated by PrmC. Methylation increases the termination efficiency of RF1.

The protein resides in the cytoplasm. In terms of biological role, peptide chain release factor 1 directs the termination of translation in response to the peptide chain termination codons UAG and UAA. The polypeptide is Peptide chain release factor 1 (Mesorhizobium japonicum (strain LMG 29417 / CECT 9101 / MAFF 303099) (Mesorhizobium loti (strain MAFF 303099))).